Reading from the N-terminus, the 1396-residue chain is DNA-directed RNA polymerase subunit beta' (1396 aa).

Residues Cys-73, Cys-75, Cys-88, and Cys-91 each coordinate Zn(2+). Asp-467, Asp-469, and Asp-471 together coordinate Mg(2+). Positions 817, 891, 898, and 901 each coordinate Zn(2+).

The protein belongs to the RNA polymerase beta' chain family. In terms of assembly, the RNAP catalytic core consists of 2 alpha, 1 beta, 1 beta' and 1 omega subunit. When a sigma factor is associated with the core the holoenzyme is formed, which can initiate transcription. Mg(2+) is required as a cofactor. It depends on Zn(2+) as a cofactor.

It catalyses the reaction RNA(n) + a ribonucleoside 5'-triphosphate = RNA(n+1) + diphosphate. In terms of biological role, DNA-dependent RNA polymerase catalyzes the transcription of DNA into RNA using the four ribonucleoside triphosphates as substrates. This is DNA-directed RNA polymerase subunit beta' from Orientia tsutsugamushi (strain Ikeda) (Rickettsia tsutsugamushi).